We begin with the raw amino-acid sequence, 1801 residues long: Protein mono-ADP-ribosyltransferase PARP14 (1801 aa).

S33 bears the Phosphoserine mark. The tract at residues 109-132 (SKTKEDVKEPDVSEELDTKLPLDG) is disordered. 3 Macro domains span residues 791–978 (KCFS…KTVF), 1003–1190 (WEKG…ARRA), and 1216–1387 (DSGV…KKRE). Residues N824, L833, 922–926 (SSGVF), D961, 1023–1024 (VQ), S1034, 1046–1049 (LSKS), 1133–1137 (GTGNL), 1175–1178 (DHEN), 1235–1236 (DI), S1247, V1258, 1332–1336 (GTGNA), and F1371 each bind a glycoprotein. Phosphoserine is present on residues S1403 and S1411. The WWE domain occupies 1523–1601 (EQESRADCIS…SLSVQRLTKS (79 aa)). The PARP catalytic domain maps to 1605–1801 (IPAHWSDMKQ…YPEYLITFRK (197 aa)).

The protein belongs to the ARTD/PARP family. Interacts with STAT6. Interacts with PARP10. Interacts with PARP9 in IFNG-stimulated macrophages; the interaction prevents PARP14-mediated STAT1 and STAT6 ADP-riboslylation. In terms of processing, auto-ADP-ribosylated. As to expression, expressed in macrophages.

It is found in the nucleus. Its subcellular location is the cytoplasm. It catalyses the reaction L-glutamyl-[protein] + NAD(+) = 5-O-(ADP-D-ribosyl)-L-glutamyl-[protein] + nicotinamide. In terms of biological role, ADP-ribosyltransferase that mediates mono-ADP-ribosylation of glutamate residues on target proteins. In contrast to PARP1 and PARP2, it is not able to mediate poly-ADP-ribosylation. Has been shown to catalyze the mono-ADP-ribosylation of STAT1 at 'Glu-657' and 'Glu-705', thus decreasing STAT1 phosphorylation which negatively regulates pro-inflammatory cytokine production in macrophages in response to IFNG stimulation. However, the role of ADP-ribosylation in the prevention of STAT1 phosphorylation has been called into question and it has been suggested that the inhibition of phosphorylation may be the result of sumoylation of STAT1 'Lys-703'. Mono-ADP-ribosylates STAT6; enhancing STAT6-dependent transcription. In macrophages, positively regulates MRC1 expression in response to IL4 stimulation by promoting STAT6 phosphorylation. Mono-ADP-ribosylates PARP9. The chain is Protein mono-ADP-ribosyltransferase PARP14 from Homo sapiens (Human).